Reading from the N-terminus, the 320-residue chain is GTP 3',8-cyclase (320 aa).

Residues 5-225 (QFDRKINYLR…IQLIKKDEKA (221 aa)) enclose the Radical SAM core domain. GTP is bound at residue R14. Residues C21 and C25 each contribute to the [4Fe-4S] cluster site. An S-adenosyl-L-methionine-binding site is contributed by Y27. A [4Fe-4S] cluster-binding site is contributed by C28. A GTP-binding site is contributed by R64. G68 provides a ligand contact to S-adenosyl-L-methionine. T95 lines the GTP pocket. S119 lines the S-adenosyl-L-methionine pocket. Position 155 (K155) interacts with GTP. Residue M189 coordinates S-adenosyl-L-methionine. [4Fe-4S] cluster contacts are provided by C248 and C251. A GTP-binding site is contributed by 253 to 255 (RIR). A [4Fe-4S] cluster-binding site is contributed by C265.

Belongs to the radical SAM superfamily. MoaA family. Monomer and homodimer. [4Fe-4S] cluster serves as cofactor.

It carries out the reaction GTP + AH2 + S-adenosyl-L-methionine = (8S)-3',8-cyclo-7,8-dihydroguanosine 5'-triphosphate + 5'-deoxyadenosine + L-methionine + A + H(+). It participates in cofactor biosynthesis; molybdopterin biosynthesis. Catalyzes the cyclization of GTP to (8S)-3',8-cyclo-7,8-dihydroguanosine 5'-triphosphate. This Campylobacter jejuni subsp. doylei (strain ATCC BAA-1458 / RM4099 / 269.97) protein is GTP 3',8-cyclase.